The chain runs to 123 residues: MAKIKARDLRGKKKEELLKQLDDLKVELSQLRVAKVTGGAASKLSKIRVVRKSIARVLTVINQTQKENLRKFYKGKKYKPLDLRPKKTRAMRRRLNKHEESLKTKKQQRKERLYPLRKYAVKA.

Lys19 carries the N6-acetyllysine modification. Residue Lys25 forms a Glycyl lysine isopeptide (Lys-Gly) (interchain with G-Cter in SUMO2) linkage. A Phosphoserine modification is found at Ser29. An N6-acetyllysine modification is found at Lys43. Residues 85–123 are disordered; sequence PKKTRAMRRRLNKHEESLKTKKQQRKERLYPLRKYAVKA. The span at 86-96 shows a compositional bias: basic residues; the sequence is KKTRAMRRRLN.

This sequence belongs to the universal ribosomal protein uL29 family. As to quaternary structure, component of the large ribosomal subunit.

Its subcellular location is the cytoplasm. Component of the large ribosomal subunit. The ribosome is a large ribonucleoprotein complex responsible for the synthesis of proteins in the cell. This chain is Large ribosomal subunit protein uL29 (RPL35), found in Oryctolagus cuniculus (Rabbit).